Consider the following 383-residue polypeptide: 8-amino-7-oxononanoate synthase (383 aa).

Residue Arg22 coordinates substrate. Gly109–Phe110 is a binding site for pyridoxal 5'-phosphate. A substrate-binding site is contributed by His134. Residues Ser178, His206, and Thr232 each coordinate pyridoxal 5'-phosphate. N6-(pyridoxal phosphate)lysine is present on Lys235. Thr348 provides a ligand contact to substrate.

Belongs to the class-II pyridoxal-phosphate-dependent aminotransferase family. BioF subfamily. Homodimer. Pyridoxal 5'-phosphate is required as a cofactor.

The enzyme catalyses 6-carboxyhexanoyl-[ACP] + L-alanine + H(+) = (8S)-8-amino-7-oxononanoate + holo-[ACP] + CO2. It functions in the pathway cofactor biosynthesis; biotin biosynthesis. Catalyzes the decarboxylative condensation of pimeloyl-[acyl-carrier protein] and L-alanine to produce 8-amino-7-oxononanoate (AON), [acyl-carrier protein], and carbon dioxide. This Vibrio campbellii (strain ATCC BAA-1116) protein is 8-amino-7-oxononanoate synthase.